The sequence spans 279 residues: tRNA dimethylallyltransferase (279 aa).

An ATP-binding site is contributed by 10 to 17 (GPTASGKS). 12–17 (TASGKS) contacts substrate.

This sequence belongs to the IPP transferase family. As to quaternary structure, monomer. Requires Mg(2+) as cofactor.

It catalyses the reaction adenosine(37) in tRNA + dimethylallyl diphosphate = N(6)-dimethylallyladenosine(37) in tRNA + diphosphate. Functionally, catalyzes the transfer of a dimethylallyl group onto the adenine at position 37 in tRNAs that read codons beginning with uridine, leading to the formation of N6-(dimethylallyl)adenosine (i(6)A). The protein is tRNA dimethylallyltransferase of Roseobacter denitrificans (strain ATCC 33942 / OCh 114) (Erythrobacter sp. (strain OCh 114)).